The primary structure comprises 456 residues: Bifunctional protein GlmU (456 aa).

Residues 1 to 229 (MLNNAMSVVI…LSEVEGVNNR (229 aa)) are pyrophosphorylase. Residues 11–14 (LAAG), Lys25, Gln76, 81–82 (GT), 103–105 (YGD), Gly140, Glu154, Asn169, and Asn227 each bind UDP-N-acetyl-alpha-D-glucosamine. Asp105 contacts Mg(2+). Asn227 contacts Mg(2+). The segment at 230–250 (LQLSRLERVYQSEQAEKLLLA) is linker. The segment at 251–456 (GVMLRDPARF…EGWRRPVKKK (206 aa)) is N-acetyltransferase. Residues Arg333 and Lys351 each contribute to the UDP-N-acetyl-alpha-D-glucosamine site. The active-site Proton acceptor is the His363. Tyr366 and Asn377 together coordinate UDP-N-acetyl-alpha-D-glucosamine. Residues Ala380, 386–387 (NY), Ser405, Ala423, and Arg440 contribute to the acetyl-CoA site.

It in the N-terminal section; belongs to the N-acetylglucosamine-1-phosphate uridyltransferase family. This sequence in the C-terminal section; belongs to the transferase hexapeptide repeat family. In terms of assembly, homotrimer. Mg(2+) serves as cofactor.

The protein localises to the cytoplasm. It carries out the reaction alpha-D-glucosamine 1-phosphate + acetyl-CoA = N-acetyl-alpha-D-glucosamine 1-phosphate + CoA + H(+). It catalyses the reaction N-acetyl-alpha-D-glucosamine 1-phosphate + UTP + H(+) = UDP-N-acetyl-alpha-D-glucosamine + diphosphate. It functions in the pathway nucleotide-sugar biosynthesis; UDP-N-acetyl-alpha-D-glucosamine biosynthesis; N-acetyl-alpha-D-glucosamine 1-phosphate from alpha-D-glucosamine 6-phosphate (route II): step 2/2. The protein operates within nucleotide-sugar biosynthesis; UDP-N-acetyl-alpha-D-glucosamine biosynthesis; UDP-N-acetyl-alpha-D-glucosamine from N-acetyl-alpha-D-glucosamine 1-phosphate: step 1/1. It participates in bacterial outer membrane biogenesis; LPS lipid A biosynthesis. Functionally, catalyzes the last two sequential reactions in the de novo biosynthetic pathway for UDP-N-acetylglucosamine (UDP-GlcNAc). The C-terminal domain catalyzes the transfer of acetyl group from acetyl coenzyme A to glucosamine-1-phosphate (GlcN-1-P) to produce N-acetylglucosamine-1-phosphate (GlcNAc-1-P), which is converted into UDP-GlcNAc by the transfer of uridine 5-monophosphate (from uridine 5-triphosphate), a reaction catalyzed by the N-terminal domain. The sequence is that of Bifunctional protein GlmU from Shigella boydii serotype 18 (strain CDC 3083-94 / BS512).